The following is a 336-amino-acid chain: MIRNEVKAFKPYRVIEGNYRIWLDKNESPYDLPEELKEEIFEELKSVPFNRYPHITSMPAREAIGEFYGLPAENVAVGKGGDELIGYLVRLFEGDYIVTTPPTFGMYSFYARLNGIPVIEVPLREDFTIDGDTIAEKAKKASAVFIASPNNPTGNLQPVEEVLKVLETGKAVVVDEAYVEFAGKDLLGLLDEYPNLVLLRTFSKAFSLAGARVGYALASEEIIEALYRIKSPFSVDIFAQAVVKVVLRHPGLFRERIREIVRERERVRRSLGELAYPSDANFLLVKADAHSFLLERGIVVRKLSGRLKGHIRVTIGRRENDAFLKAMEEWKDVAGL.

An N6-(pyridoxal phosphate)lysine modification is found at Lys204.

It belongs to the class-II pyridoxal-phosphate-dependent aminotransferase family. Histidinol-phosphate aminotransferase subfamily. Requires pyridoxal 5'-phosphate as cofactor.

It catalyses the reaction L-histidinol phosphate + 2-oxoglutarate = 3-(imidazol-4-yl)-2-oxopropyl phosphate + L-glutamate. It participates in amino-acid biosynthesis; L-histidine biosynthesis; L-histidine from 5-phospho-alpha-D-ribose 1-diphosphate: step 7/9. The chain is Histidinol-phosphate aminotransferase from Thermococcus kodakarensis (strain ATCC BAA-918 / JCM 12380 / KOD1) (Pyrococcus kodakaraensis (strain KOD1)).